We begin with the raw amino-acid sequence, 92 residues long: UPF0250 protein XOO3732 (92 aa).

It belongs to the UPF0250 family.

This is UPF0250 protein XOO3732 from Xanthomonas oryzae pv. oryzae (strain MAFF 311018).